The chain runs to 363 residues: MTPPLLEIRNVTRRFGDFTAVDNVSLTINTGEFFTLLGPSGCGKTTLLRMLAGFDQPDSGEIRLNGQDLAGVEPEKRPVHTVFQSYALFPHMSVAQNIAFPLKMAGVAKSEIDARVEQALKDVRLADKGGRMPTQLSGGQRQRVAIARALVNRPRLLLLDEPLSALDAKLREEMQIELINLQKDVGITFVYVTHDQGEALALSHRIAVMNQGRVEQLDAPETIYSFPRSRFVADFIGQCNLLDATVEAVDGERVRIDLRGLGEVQALKSFDAQPGEACVLTLRPEKIRLAQSVTADSDEVHFRGRVAELLYLGDVTLYIVELENGERLETLLPNATPGRAKFFEVGDAVEAAWRFDAGHLVRA.

The ABC transporter domain maps to 6–236; it reads LEIRNVTRRF…PRSRFVADFI (231 aa). 38–45 is an ATP binding site; that stretch reads GPSGCGKT.

It belongs to the ABC transporter superfamily. Spermidine/putrescine importer (TC 3.A.1.11.1) family. The complex is composed of two ATP-binding proteins (PotA), two transmembrane proteins (PotB and PotC) and a solute-binding protein (PotD).

Its subcellular location is the cell inner membrane. It catalyses the reaction ATP + H2O + polyamine-[polyamine-binding protein]Side 1 = ADP + phosphate + polyamineSide 2 + [polyamine-binding protein]Side 1.. Its function is as follows. Part of the ABC transporter complex PotABCD involved in spermidine/putrescine import. Responsible for energy coupling to the transport system. The chain is Spermidine/putrescine import ATP-binding protein PotA 2 from Pseudomonas aeruginosa (strain ATCC 15692 / DSM 22644 / CIP 104116 / JCM 14847 / LMG 12228 / 1C / PRS 101 / PAO1).